The primary structure comprises 1081 residues: SPX and EXS domain-containing protein 4 (1081 aa).

The 483-residue stretch at 1 to 483 (MKFRDLLNDH…RIISSECRKY (483 aa)) folds into the SPX domain. 3 disordered regions span residues 86 to 118 (ETAD…SVGF), 160 to 271 (QRNN…HDKN), and 318 to 354 (VKGD…DEDN). 3 stretches are compositionally biased toward low complexity: residues 90–110 (SPAI…NNNN), 161–196 (RNNN…TRNI), and 211–228 (SPFS…SPSP). Residues 244–264 (KDEDEEEEGEEEEDIEMEQLE) show a composition bias toward acidic residues. The segment covering 319–336 (KGDKSNDKNNDKSNDKNN) has biased composition (basic and acidic residues). The segment covering 337-349 (NKNNKNNNNNNNL) has biased composition (low complexity). The next 9 helical transmembrane spans lie at 536–556 (NLFT…QVVF), 573–593 (LAWL…MFSL), 622–642 (YLKY…LYID), 654–674 (ILIP…PFPI), 703–723 (FFMS…QSMV), 776–796 (ITSA…YIAL), 803–823 (WSII…YKFY), 854–874 (WIYY…LIIF), and 887–907 (PLFL…FIFF). Residues 738-940 (FCSQSRFFAL…SQEYNNYMDE (203 aa)) enclose the EXS domain. The tract at residues 939-1031 (DEKKKRRKRK…INDHMNPDTG (93 aa)) is disordered. The segment covering 942–951 (KKRRKRKQKQ) has biased composition (basic residues). Over residues 952 to 970 (SKSNNNNNNNNNNNNNNNN) the composition is skewed to low complexity. Polar residues predominate over residues 977 to 1003 (SSNNVETDETITSSNNTDSSHQKQPLT). A compositionally biased stretch (basic and acidic residues) spans 1013 to 1022 (NHQDHHDLSI).

The protein belongs to the SYG1 (TC 2.A.94) family.

It localises to the membrane. This is SPX and EXS domain-containing protein 4 from Dictyostelium discoideum (Social amoeba).